A 509-amino-acid polypeptide reads, in one-letter code: tRNA-2-methylthio-N(6)-dimethylallyladenosine synthase (509 aa).

Residues 1–15 are compositionally biased toward polar residues; sequence MNEQQRLASQQANSS. Positions 1 to 25 are disordered; that stretch reads MNEQQRLASQQANSSTKKEEKDYSK. The span at 16-25 shows a compositional bias: basic and acidic residues; the sequence is TKKEEKDYSK. The MTTase N-terminal domain occupies 66–184; it reads RKFYIRTYGC…LPYILKDAMF (119 aa). Cysteine 75, cysteine 111, cysteine 145, cysteine 221, cysteine 225, and cysteine 228 together coordinate [4Fe-4S] cluster. The Radical SAM core domain maps to 207–437; it reads RRGDIKAWVN…NTLVNTLAIE (231 aa). The region spanning 440–503 is the TRAM domain; sequence SRYKGQIVEV…TWSLNGELVE (64 aa).

It belongs to the methylthiotransferase family. MiaB subfamily. In terms of assembly, monomer. The cofactor is [4Fe-4S] cluster.

It localises to the cytoplasm. It catalyses the reaction N(6)-dimethylallyladenosine(37) in tRNA + (sulfur carrier)-SH + AH2 + 2 S-adenosyl-L-methionine = 2-methylsulfanyl-N(6)-dimethylallyladenosine(37) in tRNA + (sulfur carrier)-H + 5'-deoxyadenosine + L-methionine + A + S-adenosyl-L-homocysteine + 2 H(+). Its function is as follows. Catalyzes the methylthiolation of N6-(dimethylallyl)adenosine (i(6)A), leading to the formation of 2-methylthio-N6-(dimethylallyl)adenosine (ms(2)i(6)A) at position 37 in tRNAs that read codons beginning with uridine. The sequence is that of tRNA-2-methylthio-N(6)-dimethylallyladenosine synthase from Bacillus cereus (strain B4264).